The primary structure comprises 233 residues: Small ribosomal subunit protein uS2 (233 aa).

This sequence belongs to the universal ribosomal protein uS2 family.

The chain is Small ribosomal subunit protein uS2 from Bacillus cereus (strain G9842).